The primary structure comprises 62 residues: Metallothionein-4 (62 aa).

The a divalent metal cation site is built by Cys6, Cys8, Cys14, Cys16, Cys20, Cys22, Cys25, Cys27, Cys34, Cys35, Cys37, Cys38, Cys42, Cys45, Cys49, Cys51, Cys58, Cys60, and Cys61.

This sequence belongs to the metallothionein superfamily. Type 1 family.

In terms of biological role, seems to bind zinc and copper. Could play a special role in regulating zinc metabolism during the differentiation of stratified epithelia. The sequence is that of Metallothionein-4 (MT4) from Homo sapiens (Human).